The sequence spans 500 residues: MKNIAFDSNKYLSLQRNHILERIKQFDGKLYMEFGGKMLEDFHAARVLPGYEPDNKIKLLKELKDQVEIVITINANNIEHSKTRGDLGISYDQEVLRLIDTFNALDIYVGSVVITQYNHQAAADHFQKQLAKNGITSYRHYPIKGYPTDINHIISPDGMGRNDYIKTSRNLIVVTAPGPGSGKLATCISQLYHDQLNGITSGYAKFETFPVWNLPLHHPVNLAYEAATADLDDVNMIDPFHLEAYGKTAVNYNRDIEVFPVLNRTFERILSQSPYASPTDMGVNMVGFSIVNEEAAIEASKQEIIRRYYQTLVDFKAERVTETAVKKLELLMNDIGVTPKDRQVTLIARQKAELTGQPALALQLPNGQVVTGKTSDLFGPTAAVIINAIKTLAHISKETHLIEPEYVKPIQGLKINHLGSHNPRLHANEILMALAITAMNNNQADLAMKELGNLKGSEAHSTVILTNEDKHALRQLGINVTFDPVYQHHKLYRSQSQTSS.

Belongs to the UPF0371 family.

The polypeptide is UPF0371 protein SZO_06760 (Streptococcus equi subsp. zooepidemicus (strain H70)).